The following is a 548-amino-acid chain: Chaperonin GroEL (548 aa).

Residues 30-33, Lys51, 87-91, Gly415, 479-481, and Asp495 each bind ATP; these read TLGP, DGTTT, and NAA. Residues 524–548 form a disordered region; the sequence is LPKEDKSSDSSSSPAGGMGGMGGMM. Gly residues predominate over residues 539-548; that stretch reads GGMGGMGGMM.

The protein belongs to the chaperonin (HSP60) family. As to quaternary structure, forms a cylinder of 14 subunits composed of two heptameric rings stacked back-to-back. Interacts with the co-chaperonin GroES.

The protein resides in the cytoplasm. The catalysed reaction is ATP + H2O + a folded polypeptide = ADP + phosphate + an unfolded polypeptide.. Together with its co-chaperonin GroES, plays an essential role in assisting protein folding. The GroEL-GroES system forms a nano-cage that allows encapsulation of the non-native substrate proteins and provides a physical environment optimized to promote and accelerate protein folding. The chain is Chaperonin GroEL from Buchnera aphidicola subsp. Acyrthosiphon pisum (strain 5A).